We begin with the raw amino-acid sequence, 466 residues long: Gamma-aminobutyric acid permease (466 aa).

The Cytoplasmic segment spans residues 2–20; that stretch reads GQSSQPHELGGGLKSRHVT. 2 consecutive transmembrane segments (helical) span residues 21-41 and 42-62; these read MLSIAGVIGASLFVGSSVAIA and EAGPAVLLAYLFAGLLVVMIM. Residues 63 to 96 lie on the Cytoplasmic side of the membrane; sequence RMLAEMAVATPDTGSFSTYADKAIGRWAGYTIGW. The helical transmembrane segment at 97-117 threads the bilayer; the sequence is LYWWFWVLVIPLEANIAAMIL. His-118 is a topological domain (periplasmic). The chain crosses the membrane as a helical span at residues 119–139; sequence SWVPGIPIWLFSLVITLALTG. At 140–153 the chain is on the cytoplasmic side; it reads SNLLSVKNYGEFEF. A helical transmembrane segment spans residues 154–174; it reads WLALCKVIAILAFIFLGAVAI. Residues 175-199 lie on the Periplasmic side of the membrane; it reads SGFYPYAEVSGISRLWDSGGFMPNG. Residues 200 to 220 form a helical membrane-spanning segment; the sequence is FGAVLSAMLITMFSFMGAEIV. At 221–246 the chain is on the cytoplasmic side; sequence TIAAAESDTPEKHIVRATNSVIWRIS. A helical membrane pass occupies residues 247 to 267; sequence IFYLCSIFVVVALIPWNMPGL. Over 268-286 the chain is Periplasmic; it reads KAVGSYRSVLELLNIPHAK. A helical membrane pass occupies residues 287–307; that stretch reads LIMDCVILLSVTSCLNSALYT. The Cytoplasmic segment spans residues 308–334; the sequence is ASRMLYSLSRRGDAPAVMGKINRSKTP. The chain crosses the membrane as a helical span at residues 335–355; it reads YVAVLLSTGAAFLTVVVNYYA. Residues 356 to 358 lie on the Periplasmic side of the membrane; it reads PAK. A helical transmembrane segment spans residues 359 to 379; the sequence is VFKFLIDSSGAIALLVYLVIA. The Cytoplasmic portion of the chain corresponds to 380–402; sequence VSQLRMRKILRAEGSEIRLRMWL. A helical membrane pass occupies residues 403 to 423; the sequence is YPWLTWLVIGFITFVLVVMLF. Residues 424–428 are Periplasmic-facing; that stretch reads RPAQQ. A helical membrane pass occupies residues 429–449; it reads LEVISTGLLAIGIICTVPIMA. The Cytoplasmic portion of the chain corresponds to 450–466; the sequence is RWKKLVLWQKTPVHNTR.

This sequence belongs to the amino acid-polyamine-organocation (APC) superfamily. Amino acid transporter (AAT) (TC 2.A.3.1) family. Monomer.

The protein resides in the cell inner membrane. The enzyme catalyses 4-aminobutanoate(in) + H(+)(in) = 4-aminobutanoate(out) + H(+)(out). Its pathway is amino-acid degradation; 4-aminobutanoate degradation. Uptake is stimulated by ammonium sulfate and abolished by 2,4-dinitrophenol. Is affected both topologically and kinetically by phospholipid composition of the membrane. In cells lacking phosphatidylethanolamine (PE), the N-terminal hairpin is inverted relative to the membrane and the rate of GABA transport is reduced by more than 99%. Transporter for gamma-aminobutyrate (GABA). Transport is driven by the membrane potential. Can also transport a number of GABA analogs such as nipecotic acid or muscimol. The protein is Gamma-aminobutyric acid permease of Escherichia coli (strain K12).